Consider the following 411-residue polypeptide: Serine hydroxymethyltransferase (411 aa).

120 to 122 (GHL) is a binding site for (6S)-5,6,7,8-tetrahydrofolate. Residue K225 is modified to N6-(pyridoxal phosphate)lysine. 350–352 (SPF) lines the (6S)-5,6,7,8-tetrahydrofolate pocket.

The protein belongs to the SHMT family. In terms of assembly, homodimer. The cofactor is pyridoxal 5'-phosphate.

The protein localises to the cytoplasm. The enzyme catalyses (6R)-5,10-methylene-5,6,7,8-tetrahydrofolate + glycine + H2O = (6S)-5,6,7,8-tetrahydrofolate + L-serine. Its pathway is one-carbon metabolism; tetrahydrofolate interconversion. It functions in the pathway amino-acid biosynthesis; glycine biosynthesis; glycine from L-serine: step 1/1. Functionally, catalyzes the reversible interconversion of serine and glycine with tetrahydrofolate (THF) serving as the one-carbon carrier. This reaction serves as the major source of one-carbon groups required for the biosynthesis of purines, thymidylate, methionine, and other important biomolecules. Also exhibits THF-independent aldolase activity toward beta-hydroxyamino acids, producing glycine and aldehydes, via a retro-aldol mechanism. In Limosilactobacillus reuteri (strain DSM 20016) (Lactobacillus reuteri), this protein is Serine hydroxymethyltransferase.